We begin with the raw amino-acid sequence, 227 residues long: Enolase-phosphatase E1 (227 aa).

2 residues coordinate Mg(2+): Asp-11 and Glu-13. Residues 118–119 and Lys-161 contribute to the substrate site; that span reads SS. Residue Asp-186 coordinates Mg(2+).

It belongs to the HAD-like hydrolase superfamily. MasA/MtnC family. In terms of assembly, monomer. It depends on Mg(2+) as a cofactor.

The protein localises to the cytoplasm. Its subcellular location is the nucleus. The enzyme catalyses 5-methylsulfanyl-2,3-dioxopentyl phosphate + H2O = 1,2-dihydroxy-5-(methylsulfanyl)pent-1-en-3-one + phosphate. It functions in the pathway amino-acid biosynthesis; L-methionine biosynthesis via salvage pathway; L-methionine from S-methyl-5-thio-alpha-D-ribose 1-phosphate: step 3/6. The protein operates within amino-acid biosynthesis; L-methionine biosynthesis via salvage pathway; L-methionine from S-methyl-5-thio-alpha-D-ribose 1-phosphate: step 4/6. Functionally, bifunctional enzyme that catalyzes the enolization of 2,3-diketo-5-methylthiopentyl-1-phosphate (DK-MTP-1-P) into the intermediate 2-hydroxy-3-keto-5-methylthiopentenyl-1-phosphate (HK-MTPenyl-1-P), which is then dephosphorylated to form the acireductone 1,2-dihydroxy-3-keto-5-methylthiopentene (DHK-MTPene). The sequence is that of Enolase-phosphatase E1 from Saccharomyces cerevisiae (strain JAY291) (Baker's yeast).